The sequence spans 100 residues: Integration host factor subunit alpha (100 aa).

The protein belongs to the bacterial histone-like protein family. In terms of assembly, heterodimer of an alpha and a beta chain.

Its function is as follows. This protein is one of the two subunits of integration host factor, a specific DNA-binding protein that functions in genetic recombination as well as in transcriptional and translational control. The polypeptide is Integration host factor subunit alpha (Ruegeria pomeroyi (strain ATCC 700808 / DSM 15171 / DSS-3) (Silicibacter pomeroyi)).